We begin with the raw amino-acid sequence, 566 residues long: MAATHLHIPPNPKTQTSHQNPPFWFSSKTGIYTSKFPSLHLPVDPNLDAVSALFSHKHHGDTALIDSLTGFSISHTELQIMVQSMAAGIYHVLGVRQGDVVSLVLPNSVYFPMIFLSLISLGAIVTTMNPSSSLGEIKKQVSECSVGLAFTSTENVEKLSSLGVSVISVSESYDFDSIRIENPKFYSIMKESFGFVPKPLIKQDDVAAIMYSSGTTGASKGVLLTHRNLIASMELFVRFEASQYEYPGSSNVYLAALPLCHIYGLSLFVMGLLSLGSTIVVMKRFDASDVVNVIERFKITHFPVVPPMLMALTKKAKGVCGEVFKSLKQVSSGAAPLSRKFIEDFLQTLPHVDLIQGYGMTESTAVGTRGFNSEKLSRYSSVGLLAPNMQAKVVDWSSGSFLPPGNRGELWIQGPGVMKGYLNNPKATQMSIVEDSWLRTGDIAYFDEDGYLFIVDRIKEIIKYKGFQIAPADLEAVLVSHPLIIDAAVTAAPNEECGEIPVAFVVRRQETTLSEEDVISYVASQVAPYRKVRKVVMVNSIPKSPTGKILRKELKRILTNSVSSRL.

Residues 1–21 form a disordered region; the sequence is MAATHLHIPPNPKTQTSHQNP. The ATP site is built by S212, S213, G214, T215, T216, and K220. Y263 is a binding site for (E)-4-coumaroyl-AMP. R284 is a binding site for CoA. The segment at 286–356 is SBD1; it reads DASDVVNVIE…QTLPHVDLIQ (71 aa). 4 residues coordinate (E)-4-coumaroyl-AMP: A334, Q356, G357, and T361. Residues Q356, G357, T361, D442, and R457 each coordinate ATP. Residues 357 to 421 form an SBD2 region; sequence GYGMTESTAV…IQGPGVMKGY (65 aa). Residues K459 and K463 each contribute to the (E)-4-coumaroyl-AMP site. CoA-binding residues include K465 and G466. K548 lines the ATP pocket. Residues 564–566 carry the Microbody targeting signal motif; the sequence is SRL.

The protein belongs to the ATP-dependent AMP-binding enzyme family. Mg(2+) is required as a cofactor. As to expression, expressed at very low level in leaves.

It is found in the peroxisome. It carries out the reaction (E)-4-coumarate + ATP + CoA = (E)-4-coumaroyl-CoA + AMP + diphosphate. The catalysed reaction is (E)-4-coumarate + ATP + H(+) = (E)-4-coumaroyl-AMP + diphosphate. It catalyses the reaction (E)-4-coumaroyl-AMP + CoA = (E)-4-coumaroyl-CoA + AMP + H(+). The enzyme catalyses (E)-ferulate + ATP + CoA = (E)-feruloyl-CoA + AMP + diphosphate. It carries out the reaction (E)-ferulate + ATP + H(+) = (E)-feruloyl-AMP + diphosphate. The catalysed reaction is (E)-feruloyl-AMP + CoA = (E)-feruloyl-CoA + AMP + H(+). It catalyses the reaction (E)-caffeate + ATP + CoA = (E)-caffeoyl-CoA + AMP + diphosphate. The enzyme catalyses (E)-caffeate + ATP + H(+) = (E)-caffeoyl-AMP + diphosphate. It carries out the reaction (E)-caffeoyl-AMP + CoA = (E)-caffeoyl-CoA + AMP + H(+). The catalysed reaction is (E)-cinnamate + ATP + CoA = (E)-cinnamoyl-CoA + AMP + diphosphate. It catalyses the reaction 4-hydroxybenzoate + ATP + CoA = 4-hydroxybenzoyl-CoA + AMP + diphosphate. The enzyme catalyses tetradecanoate + ATP + CoA = tetradecanoyl-CoA + AMP + diphosphate. It carries out the reaction hexanoate + ATP + CoA = hexanoyl-CoA + AMP + diphosphate. The catalysed reaction is heptanoate + ATP + CoA = heptanoyl-CoA + AMP + diphosphate. Functionally, contributes to jasmonic acid biosynthesis by initiating the beta-oxidative chain shortening of its precursors. Acts as a carboxylate--CoA ligase that can use preferentially p-coumarate, ferulate and caffeate as substrates and, with a lower efficiency, (E)-cinnamate and 4-hydroxybenzoate as substrates. Involved in the biosynthesis of ubiquinone from phenylalanine by activating the propyl side chain of 4-coumarate, and possibly trans-cinnamate and 4-hydroxybenzoate, for subsequent beta-oxidative shortening and the formation of the benzenoid moiety of ubiquinone. Follows a two-step reaction mechanism, wherein the carboxylate substrate first undergoes adenylation by ATP, followed by a thioesterification in the presence of CoA to yield the final CoA thioester. In Arabidopsis thaliana (Mouse-ear cress), this protein is 4-coumarate--CoA ligase-like 6.